Here is a 652-residue protein sequence, read N- to C-terminus: Protein phosphatase Slingshot homolog 3 (652 aa).

Residues 1-16 show a composition bias toward polar residues; that stretch reads MALVTVSRSPPASGHS. The disordered stretch occupies residues 1 to 31; sequence MALVTVSRSPPASGHSTPVGPTDRVIRRRGR. Alanine 2 bears the N-acetylalanine mark. Residues serine 9, serine 37, serine 85, and serine 87 each carry the phosphoserine modification. Positions 43 to 91 are disordered; that stretch reads GAVLGLQDGGEGNDAAEADPEPMEKPSGEEQPAEDQTDNGQGSQSPWKQ. Polar residues predominate over residues 80–90; sequence DNGQGSQSPWK. Residues 266–321 form the DEK-C domain; that stretch reads EQMEQAILAELWQVLDASDLDSVTSKEIRQALELRLGCPLQQYRDFIDNQMLLLMA. The Tyrosine-protein phosphatase domain maps to 325 to 466; the sequence is RASRIFPHLY…LQTYQGILTA (142 aa). Cysteine 410 functions as the Phosphocysteine intermediate in the catalytic mechanism. 3 disordered regions span residues 484-526, 540-580, and 610-652; these read EPLA…LGLR, LLEP…KGGQ, and RAFQ…EGKA. Positions 540-552 are enriched in low complexity; the sequence is LLEPSSEPESTTE. Basic and acidic residues predominate over residues 642-652; the sequence is SVDDSREEGKA.

It belongs to the protein-tyrosine phosphatase family. Does not bind to, or colocalize with, filamentous actin.

The protein resides in the cytoplasm. The protein localises to the cytoskeleton. It localises to the nucleus. It carries out the reaction O-phospho-L-tyrosyl-[protein] + H2O = L-tyrosyl-[protein] + phosphate. The enzyme catalyses O-phospho-L-seryl-[protein] + H2O = L-seryl-[protein] + phosphate. The catalysed reaction is O-phospho-L-threonyl-[protein] + H2O = L-threonyl-[protein] + phosphate. Protein phosphatase which may play a role in the regulation of actin filament dynamics. Can dephosphorylate and activate the actin binding/depolymerizing factor cofilin, which subsequently binds to actin filaments and stimulates their disassembly. This Rattus norvegicus (Rat) protein is Protein phosphatase Slingshot homolog 3 (Ssh3).